We begin with the raw amino-acid sequence, 144 residues long: Large ribosomal subunit protein uL15 (144 aa).

The interval 1 to 48 is disordered; it reads MQLNNLKPAAGSKHAKRRVGRGIGSGLGKTAGRGHKGQKSRSGGFHKV. A compositionally biased stretch (gly residues) spans 21 to 31; it reads RGIGSGLGKTA.

Belongs to the universal ribosomal protein uL15 family. Part of the 50S ribosomal subunit.

In terms of biological role, binds to the 23S rRNA. The chain is Large ribosomal subunit protein uL15 from Cupriavidus taiwanensis (strain DSM 17343 / BCRC 17206 / CCUG 44338 / CIP 107171 / LMG 19424 / R1) (Ralstonia taiwanensis (strain LMG 19424)).